We begin with the raw amino-acid sequence, 540 residues long: MTTEIQLELEQAVNQRRNFAIISHPDAGKTTLTEKLLLYGGAIHQAGAVKARRDQRKATSDWMEMEKQRGISITSTVLQFDYKNIQINLLDTPGHQDFSEDTYRTLAAADNAVMLIDAAKGLEPQTRKLFEVCKLRALPIFTFVNKLDRPGREPLELLDEIEQELGLQIYAVNWPIGIGDRFKGVYDRRSKAIHLFERRAHGSQEAQETVIQLGDPKIEEYLEQDLYYQLKEDLEILEEIGADLDLEKVHSGQMTPIFFGSAMTNFGVKLFLEAFLDYALKPIGRNSSVGLVDPSYPEFSGFVFKLQANMDPKHRDRVAFVRVCTGKFEKDMTVNHARTGKTVRLSRPQKLFAQDRASIEEAYPGDVIGLNNPGVFAIGDTIYNGKKLEYEGIPCFSPELFSYLKNPNPSKFKQFQKGIQELTEEGAIQIMFSTDDFIRDPILAAVGQLQFEVVQFRMLSEYGVETRLEPLSYSLARWVAGGWKAIEEAGRIFNTMTVKDGWGRPVLLFKNEWNLQQVKEDHPKLELTSIAPVGSGIQPS.

Residues 14–283 form the tr-type G domain; that stretch reads NQRRNFAIIS…AFLDYALKPI (270 aa). Residues 23–30, 91–95, and 145–148 each bind GTP; these read SHPDAGKT, DTPGH, and NKLD.

This sequence belongs to the TRAFAC class translation factor GTPase superfamily. Classic translation factor GTPase family. PrfC subfamily.

It is found in the cytoplasm. Its function is as follows. Increases the formation of ribosomal termination complexes and stimulates activities of RF-1 and RF-2. It binds guanine nucleotides and has strong preference for UGA stop codons. It may interact directly with the ribosome. The stimulation of RF-1 and RF-2 is significantly reduced by GTP and GDP, but not by GMP. The protein is Peptide chain release factor 3 of Gloeothece citriformis (strain PCC 7424) (Cyanothece sp. (strain PCC 7424)).